Here is a 363-residue protein sequence, read N- to C-terminus: Phosphoserine aminotransferase (363 aa).

R42 serves as a coordination point for L-glutamate. Pyridoxal 5'-phosphate is bound by residues 76 to 77 (GR), W102, T156, D175, and Q198. K199 is modified (N6-(pyridoxal phosphate)lysine). Residue 240-241 (NT) coordinates pyridoxal 5'-phosphate.

This sequence belongs to the class-V pyridoxal-phosphate-dependent aminotransferase family. SerC subfamily. As to quaternary structure, homodimer. It depends on pyridoxal 5'-phosphate as a cofactor.

It is found in the cytoplasm. The enzyme catalyses O-phospho-L-serine + 2-oxoglutarate = 3-phosphooxypyruvate + L-glutamate. It carries out the reaction 4-(phosphooxy)-L-threonine + 2-oxoglutarate = (R)-3-hydroxy-2-oxo-4-phosphooxybutanoate + L-glutamate. The protein operates within amino-acid biosynthesis; L-serine biosynthesis; L-serine from 3-phospho-D-glycerate: step 2/3. It functions in the pathway cofactor biosynthesis; pyridoxine 5'-phosphate biosynthesis; pyridoxine 5'-phosphate from D-erythrose 4-phosphate: step 3/5. Its function is as follows. Catalyzes the reversible conversion of 3-phosphohydroxypyruvate to phosphoserine and of 3-hydroxy-2-oxo-4-phosphonooxybutanoate to phosphohydroxythreonine. In Shewanella sp. (strain MR-7), this protein is Phosphoserine aminotransferase.